The primary structure comprises 436 residues: Cysteine--tRNA ligase (436 aa).

Residue cysteine 24 participates in Zn(2+) binding. The 'HIGH' region motif lies at 26-36; that stretch reads PTVYNHIHIGN. Zn(2+) contacts are provided by cysteine 202, histidine 227, and glutamate 231. The 'KMSKS' region signature appears at 259-263; sequence KMSKS. ATP is bound at residue lysine 262.

The protein belongs to the class-I aminoacyl-tRNA synthetase family. In terms of assembly, monomer. Zn(2+) serves as cofactor.

The protein localises to the cytoplasm. The enzyme catalyses tRNA(Cys) + L-cysteine + ATP = L-cysteinyl-tRNA(Cys) + AMP + diphosphate. This is Cysteine--tRNA ligase from Ureaplasma parvum serovar 3 (strain ATCC 700970).